Consider the following 339-residue polypeptide: RNA polymerase II holoenzyme cyclin-like subunit (339 aa).

The disordered stretch occupies residues P48 to R67. The segment covering N49–N60 has biased composition (low complexity). The 102-residue stretch at R93–I194 folds into the Cyclin N-terminal domain.

It belongs to the cyclin family. Cyclin C subfamily. As to quaternary structure, component of the SRB8-11 complex, a regulatory module of the Mediator complex.

Its subcellular location is the nucleus. In terms of biological role, component of the SRB8-11 complex. The SRB8-11 complex is a regulatory module of the Mediator complex which is itself involved in regulation of basal and activated RNA polymerase II-dependent transcription. The SRB8-11 complex may be involved in the transcriptional repression of a subset of genes regulated by Mediator. It may inhibit the association of the Mediator complex with RNA polymerase II to form the holoenzyme complex. The SRB8-11 complex phosphorylates the C-terminal domain (CTD) of the largest subunit of RNA polymerase II. This is RNA polymerase II holoenzyme cyclin-like subunit (SSN8) from Candida glabrata (strain ATCC 2001 / BCRC 20586 / JCM 3761 / NBRC 0622 / NRRL Y-65 / CBS 138) (Yeast).